The chain runs to 50 residues: Large ribosomal subunit protein bL33B (50 aa).

This sequence belongs to the bacterial ribosomal protein bL33 family.

The polypeptide is Large ribosomal subunit protein bL33B (Streptococcus agalactiae serotype V (strain ATCC BAA-611 / 2603 V/R)).